A 488-amino-acid polypeptide reads, in one-letter code: Dipeptidase 3 (488 aa).

Residues 1–35 (MQPTGPEGPRALSLRPLGHRLSLLGVLLIIPSLWV) form the signal peptide. Residues 41–60 (TPSLSSAPTSPGASSAMTTP) show a composition bias toward low complexity. Residues 41 to 74 (TPSLSSAPTSPGASSAMTTPGIPNDTTTSGVTSD) are disordered. 2 cysteine pairs are disulfide-bonded: cysteine 143/cysteine 222 and cysteine 294/cysteine 326. An N-linked (GlcNAc...) asparagine glycan is attached at asparagine 331. Serine 459 is lipidated: GPI-anchor amidated serine. The propeptide at 460-487 (KAPPCPLLGLVAAVTSPAFTLWLCCSGH) is removed in mature form.

This sequence belongs to the metallo-dependent hydrolases superfamily. Peptidase M19 family. As to quaternary structure, homodimer; disulfide-linked. Interacts with TEX101; co-localized on the cell surface of spermatocytes, spermatids, and testicular spermatozoa, co-localized only in cytoplasmic droplets of caput and corpus epididymal sperm.

It is found in the membrane. Its function is as follows. Lacks dipeptidase activity and is unable to hydrolyze cystinyl-bis-glycine, leukotriene D4 and the beta-lactam antibiotic imipenem. The absence of activity may be due to the inability of serine (instead of aspartate found in DPEP1/2) at position 356 to function as the acid/base catalyst and activate the nucleophilic water/hydroxide. In Rattus norvegicus (Rat), this protein is Dipeptidase 3 (Dpep3).